A 69-amino-acid chain; its full sequence is Large ribosomal subunit protein uL29 (69 aa).

Belongs to the universal ribosomal protein uL29 family.

The sequence is that of Large ribosomal subunit protein uL29 from Mycoplasmopsis agalactiae (strain NCTC 10123 / CIP 59.7 / PG2) (Mycoplasma agalactiae).